The primary structure comprises 634 residues: DNA gyrase subunit B (634 aa).

The tract at residues 1 to 220 (MSYDASAIRV…EEVFLDKGGV (220 aa)) is ATPase domain. The interval 221-390 (ASFAKALAEG…EAARKARELV (170 aa)) is transducer domain. One can recognise a Toprim domain in the interval 416–534 (AELFIVEGDS…RGHVYIAQPP (119 aa)). Mg(2+) contacts are provided by glutamate 422, aspartate 499, and aspartate 501.

It belongs to the type II topoisomerase GyrB family. As to quaternary structure, heterotetramer, composed of two GyrA and two GyrB chains. Non-hydrolyzable ATP analogs induce dimerization, novobiocin also induces a small amount of dimerization. The two subunits form an intertwined dimer where the GyrB ATPase transducer helix of 1 subunit connects to the Toprim domain of the other GyrB subunit through a 10 residue linker. In the heterotetramer, GyrA contains the active site tyrosine that forms a covalent intermediate with the DNA, while GyrB binds cofactors and catalyzes ATP hydrolysis. Mg(2+) is required as a cofactor. Requires Mn(2+) as cofactor. It depends on Ca(2+) as a cofactor.

The protein localises to the cytoplasm. The enzyme catalyses ATP-dependent breakage, passage and rejoining of double-stranded DNA.. Its function is as follows. A type II topoisomerase that negatively supercoils closed circular double-stranded (ds) DNA in an ATP-dependent manner. It probably also catalyzes the interconversion of other topological isomers of double-stranded DNA rings, including catenanes. Relaxes negatively supercoiled DNA in an ATP-independent manner. At comparable concentrations T.thermophilus gyrase does not introduce as many negative supercoils into DNA as the E.coli enzyme. In terms of biological role, negative supercoiling favors strand separation, and DNA replication, transcription, recombination and repair, all of which involve strand separation. Type II topoisomerases break and join 2 DNA strands simultaneously in an ATP-dependent manner. The sequence is that of DNA gyrase subunit B from Thermus thermophilus (strain ATCC 27634 / DSM 579 / HB8).